We begin with the raw amino-acid sequence, 364 residues long: Ribosomal RNA large subunit methyltransferase F (364 aa).

Residues 1–28 (MTNKRKSAKPLEPAKRTPKLRTKKSRDL) form a disordered region.

This sequence belongs to the methyltransferase superfamily. METTL16/RlmF family.

The protein resides in the cytoplasm. The catalysed reaction is adenosine(1618) in 23S rRNA + S-adenosyl-L-methionine = N(6)-methyladenosine(1618) in 23S rRNA + S-adenosyl-L-homocysteine + H(+). Functionally, specifically methylates the adenine in position 1618 of 23S rRNA. This Vibrio vulnificus (strain YJ016) protein is Ribosomal RNA large subunit methyltransferase F.